We begin with the raw amino-acid sequence, 5085 residues long: Linear gramicidin synthase subunit D (5085 aa).

Carrier domains are found at residues 962-1037 (APRT…AAAG), 2023-2097 (SPST…EEKA), 3544-3619 (APRN…ELLT), and 4601-4676 (APQT…EEII). An O-(pantetheine 4'-phosphoryl)serine mark is found at S997, S2058, S3579, and S4636.

This sequence belongs to the ATP-dependent AMP-binding enzyme family. Large multienzyme complex composed of 4 subunits; LgrA, LgrB, LgrC and LgrD. Requires pantetheine 4'-phosphate as cofactor.

Its function is as follows. Activates the 13th to the 16th (Trp, D-Leu, Trp and Gly) amino acids in linear gramicidin and catalyzes the formation of the peptide bond between them. This enzyme is also responsible for the epimerization of the 14th (D-Leu) amino acid. It also catalyzes the NAD(P)H-dependent reduction of the C-terminal glycine residue of the N-formylated 16-mer peptide, that binds to the peptidyl carrier domain of the terminal module of this protein, to form a peptidyl-aldehyde intermediate that is released from the enzyme complex. The protein is Linear gramicidin synthase subunit D (lgrD) of Brevibacillus parabrevis.